Consider the following 647-residue polypeptide: Threonine--tRNA ligase (647 aa).

Residues 1 to 61 (MIKITFPDGA…EEDGSIEIVT (61 aa)) form the TGS domain. The catalytic stretch occupies residues 240–538 (DHRKLGKELD…LIETYKGAFP (299 aa)). Zn(2+)-binding residues include cysteine 334, histidine 385, and histidine 515.

The protein belongs to the class-II aminoacyl-tRNA synthetase family. As to quaternary structure, homodimer. The cofactor is Zn(2+).

It localises to the cytoplasm. The catalysed reaction is tRNA(Thr) + L-threonine + ATP = L-threonyl-tRNA(Thr) + AMP + diphosphate + H(+). Catalyzes the attachment of threonine to tRNA(Thr) in a two-step reaction: L-threonine is first activated by ATP to form Thr-AMP and then transferred to the acceptor end of tRNA(Thr). Also edits incorrectly charged L-seryl-tRNA(Thr). This Streptococcus pyogenes serotype M1 protein is Threonine--tRNA ligase.